A 387-amino-acid polypeptide reads, in one-letter code: EARP-interacting protein homolog (387 aa).

WD repeat units follow at residues 132–172, 182–222, 226–266, 270–310, and 345–385; these read TAHG…SKAV, KGQL…QIYC, AHGQ…DPVK, EHSH…SEPF, and EHED…KYHI.

The protein belongs to the WD repeat EIPR1 family.

The protein is EARP-interacting protein homolog of Gekko japonicus (Schlegel's Japanese gecko).